A 952-amino-acid polypeptide reads, in one-letter code: Eukaryotic translation initiation factor 3 subunit A (952 aa).

The PCI domain occupies H315–P491. Residues D522 to T849 adopt a coiled-coil conformation. Residues E757–R797 are compositionally biased toward basic and acidic residues. Residues E757–A952 are disordered. The span at A798–A809 shows a compositional bias: low complexity. The span at E810 to E844 shows a compositional bias: basic and acidic residues. Composition is skewed to low complexity over residues R856–S878 and G893–P918.

The protein belongs to the eIF-3 subunit A family. In terms of assembly, component of the eukaryotic translation initiation factor 3 (eIF-3) complex.

The protein localises to the cytoplasm. Its function is as follows. RNA-binding component of the eukaryotic translation initiation factor 3 (eIF-3) complex, which is involved in protein synthesis of a specialized repertoire of mRNAs and, together with other initiation factors, stimulates binding of mRNA and methionyl-tRNAi to the 40S ribosome. The eIF-3 complex specifically targets and initiates translation of a subset of mRNAs involved in cell proliferation. The chain is Eukaryotic translation initiation factor 3 subunit A from Cryptococcus neoformans var. neoformans serotype D (strain B-3501A) (Filobasidiella neoformans).